Consider the following 473-residue polypeptide: Bifunctional protein GlmU (473 aa).

A pyrophosphorylase region spans residues methionine 1–proline 240. Residues lysine 25, glutamine 83, glycine 88–threonine 89, serine 110–aspartate 112, glycine 147, glutamate 165, and asparagine 238 contribute to the UDP-N-acetyl-alpha-D-glucosamine site. Position 112 (aspartate 112) interacts with Mg(2+). Asparagine 238 is a Mg(2+) binding site. The tract at residues valine 241–glutamine 261 is linker. The segment at glycine 262 to valine 473 is N-acetyltransferase. Residues arginine 348 and lysine 366 each coordinate UDP-N-acetyl-alpha-D-glucosamine. Histidine 378 (proton acceptor) is an active-site residue. Residues tyrosine 381 and asparagine 392 each coordinate UDP-N-acetyl-alpha-D-glucosamine. Residues alanine 395, asparagine 401–tyrosine 402, serine 420, glycine 438, and arginine 455 each bind acetyl-CoA.

The protein in the N-terminal section; belongs to the N-acetylglucosamine-1-phosphate uridyltransferase family. It in the C-terminal section; belongs to the transferase hexapeptide repeat family. As to quaternary structure, homotrimer. It depends on Mg(2+) as a cofactor.

The protein localises to the cytoplasm. It carries out the reaction alpha-D-glucosamine 1-phosphate + acetyl-CoA = N-acetyl-alpha-D-glucosamine 1-phosphate + CoA + H(+). The enzyme catalyses N-acetyl-alpha-D-glucosamine 1-phosphate + UTP + H(+) = UDP-N-acetyl-alpha-D-glucosamine + diphosphate. The protein operates within nucleotide-sugar biosynthesis; UDP-N-acetyl-alpha-D-glucosamine biosynthesis; N-acetyl-alpha-D-glucosamine 1-phosphate from alpha-D-glucosamine 6-phosphate (route II): step 2/2. It functions in the pathway nucleotide-sugar biosynthesis; UDP-N-acetyl-alpha-D-glucosamine biosynthesis; UDP-N-acetyl-alpha-D-glucosamine from N-acetyl-alpha-D-glucosamine 1-phosphate: step 1/1. Its pathway is bacterial outer membrane biogenesis; LPS lipid A biosynthesis. In terms of biological role, catalyzes the last two sequential reactions in the de novo biosynthetic pathway for UDP-N-acetylglucosamine (UDP-GlcNAc). The C-terminal domain catalyzes the transfer of acetyl group from acetyl coenzyme A to glucosamine-1-phosphate (GlcN-1-P) to produce N-acetylglucosamine-1-phosphate (GlcNAc-1-P), which is converted into UDP-GlcNAc by the transfer of uridine 5-monophosphate (from uridine 5-triphosphate), a reaction catalyzed by the N-terminal domain. The sequence is that of Bifunctional protein GlmU from Polaromonas naphthalenivorans (strain CJ2).